Consider the following 2314-residue polypeptide: Protein Ycf2 (2314 aa).

ATP is bound at residue 1653–1660; it reads GSIGTGRS.

Belongs to the Ycf2 family.

It localises to the plastid. The protein localises to the chloroplast stroma. Probable ATPase of unknown function. Its presence in a non-photosynthetic plant (Epifagus virginiana) and experiments in tobacco indicate that it has an essential function which is probably not related to photosynthesis. This Piper cenocladum (Ant piper) protein is Protein Ycf2.